The following is a 126-amino-acid chain: Large ribosomal subunit protein bL20c (126 aa).

The protein belongs to the bacterial ribosomal protein bL20 family.

The protein resides in the plastid. The protein localises to the chloroplast. Functionally, binds directly to 23S ribosomal RNA and is necessary for the in vitro assembly process of the 50S ribosomal subunit. It is not involved in the protein synthesizing functions of that subunit. This is Large ribosomal subunit protein bL20c from Lactuca sativa (Garden lettuce).